Consider the following 380-residue polypeptide: Cell division protein FtsZ (380 aa).

GTP contacts are provided by residues 27–31 (GAGNN), 119–121 (GTG), glutamate 150, and asparagine 189.

This sequence belongs to the FtsZ family. Homodimer. Polymerizes to form a dynamic ring structure in a strictly GTP-dependent manner. Interacts directly with several other division proteins.

Its subcellular location is the cytoplasm. Functionally, essential cell division protein that forms a contractile ring structure (Z ring) at the future cell division site. The regulation of the ring assembly controls the timing and the location of cell division. One of the functions of the FtsZ ring is to recruit other cell division proteins to the septum to produce a new cell wall between the dividing cells. Binds GTP and shows GTPase activity. The polypeptide is Cell division protein FtsZ (Mycoplasma pneumoniae (strain ATCC 29342 / M129 / Subtype 1) (Mycoplasmoides pneumoniae)).